The sequence spans 197 residues: Putative RNA-binding protein EEED8.12 (197 aa).

Residues 61 to 138 enclose the RRM domain; the sequence is KSVFIGNVDF…RPIVVTAKRT (78 aa). A disordered region spans residues 142 to 166; the sequence is GMGHGVRGSSRGTFGRGRGAARGAP.

The chain is Putative RNA-binding protein EEED8.12 from Caenorhabditis elegans.